Here is a 324-residue protein sequence, read N- to C-terminus: Fructose-1,6-bisphosphatase class 1 (324 aa).

Mg(2+) contacts are provided by Glu88, Asp107, Leu109, and Asp110. Residues 110-113, Asn199, and Lys265 contribute to the substrate site; that span reads DGSS. Glu271 contacts Mg(2+).

Belongs to the FBPase class 1 family. As to quaternary structure, homotetramer. Mg(2+) serves as cofactor.

It localises to the cytoplasm. The enzyme catalyses beta-D-fructose 1,6-bisphosphate + H2O = beta-D-fructose 6-phosphate + phosphate. Its pathway is carbohydrate biosynthesis; gluconeogenesis. The chain is Fructose-1,6-bisphosphatase class 1 from Neisseria gonorrhoeae (strain ATCC 700825 / FA 1090).